Reading from the N-terminus, the 277-residue chain is SPX domain-containing protein 3 (277 aa).

The 152-residue stretch at 1–152 folds into the SPX domain; sequence MKFGKRLKKQ…GRLLRLPFIE (152 aa).

The polypeptide is SPX domain-containing protein 3 (SPX3) (Oryza sativa subsp. indica (Rice)).